Consider the following 367-residue polypeptide: Peptide chain release factor 2 (367 aa).

Residue Gln-254 is modified to N5-methylglutamine.

The protein belongs to the prokaryotic/mitochondrial release factor family. Methylated by PrmC. Methylation increases the termination efficiency of RF2.

It is found in the cytoplasm. Functionally, peptide chain release factor 2 directs the termination of translation in response to the peptide chain termination codons UGA and UAA. The protein is Peptide chain release factor 2 of Variovorax paradoxus (strain S110).